The primary structure comprises 284 residues: NADH-cytochrome b5 reductase 1 (284 aa).

Residues 7–27 (KLVVVIVIVVVPLLFKFIIGP) form a helical membrane-spanning segment. The FAD-binding FR-type domain occupies 38–142 (NDFQSFPLVE…KGPRGNYHYE (105 aa)). FAD is bound at residue 148-180 (HLGMIAGGTGIAPMYQIMKAIAMDSHDTTKVSL).

Belongs to the flavoprotein pyridine nucleotide cytochrome reductase family. Monomer. Component of the 2-(3-amino-3-carboxypropyl)histidine synthase complex composed of DPH1, DPH2, KTI11/DPH3 and a NADH-dependent reductase, predominantly CBR1. Interacts with KTI11/DPH3. Interacts with STE20. The cofactor is FAD.

The protein localises to the mitochondrion outer membrane. The catalysed reaction is 2 Fe(III)-[cytochrome b5] + NADH = 2 Fe(II)-[cytochrome b5] + NAD(+) + H(+). It carries out the reaction 2 Fe(3+)-[Dph3] + NADH = 2 Fe(2+)-[Dph3] + NAD(+) + H(+). It participates in protein modification; peptidyl-diphthamide biosynthesis. Its activity is regulated as follows. Competitively inhibited by NAD(+). Inhibited by mercurials such as p-chloromercuribenzoate (PCMB) and HgCl(2). Enzymatic activity increases under anaerobic conditions. In terms of biological role, NADH-dependent reductase for KTI11/DPH3 and cytochrome b5. Required for the first step of diphthamide biosynthesis, a post-translational modification of histidine which occurs in elongation factor 2. DPH1 and DPH2 transfer a 3-amino-3-carboxypropyl (ACP) group from S-adenosyl-L-methionine (SAM) to a histidine residue, the reaction is assisted by a reduction system comprising KTI11/DPH3 and a NADH-dependent reductase, predominantly CBR1. By reducing KTI11/DPH3, also involved in the formation of the tRNA wobble base modification mcm5s 2U (5-methoxycarbonylmethyl-2-thiouridine), mediated by the elongator complex. The cytochrome b5/NADH cytochrome b5 reductase electron transfer system supports the catalytic activity of several sterol biosynthetic enzymes. Plays a role in bud morphology. The chain is NADH-cytochrome b5 reductase 1 (CBR1) from Saccharomyces cerevisiae (strain YJM789) (Baker's yeast).